The primary structure comprises 262 residues: Cytochrome c oxidase subunit 3 (262 aa).

A run of 7 helical transmembrane segments spans residues 11–31 (LVEPSPWPLVGGSAAFTLTVG), 32–52 (LVMWFHYNSISLMILGLVMIV), 83–103 (GMVLFIVSEVFFFLAFFWAFF), 125–147 (LNAFAVPLLNTAVLLSSGVTVTW), 160–180 (AIQSLAITVMLGLYFTGLQAW), 198–218 (FFVATGFHGLHVIIGSTFLMV), and 240–260 (AWYWHFVDVVWLFLYVCIYWW).

It belongs to the cytochrome c oxidase subunit 3 family. Component of the cytochrome c oxidase (complex IV, CIV), a multisubunit enzyme composed of a catalytic core of 3 subunits and several supernumerary subunits. The complex exists as a monomer or a dimer and forms supercomplexes (SCs) in the inner mitochondrial membrane with ubiquinol-cytochrome c oxidoreductase (cytochrome b-c1 complex, complex III, CIII).

The protein localises to the mitochondrion inner membrane. The enzyme catalyses 4 Fe(II)-[cytochrome c] + O2 + 8 H(+)(in) = 4 Fe(III)-[cytochrome c] + 2 H2O + 4 H(+)(out). Its function is as follows. Component of the cytochrome c oxidase, the last enzyme in the mitochondrial electron transport chain which drives oxidative phosphorylation. The respiratory chain contains 3 multisubunit complexes succinate dehydrogenase (complex II, CII), ubiquinol-cytochrome c oxidoreductase (cytochrome b-c1 complex, complex III, CIII) and cytochrome c oxidase (complex IV, CIV), that cooperate to transfer electrons derived from NADH and succinate to molecular oxygen, creating an electrochemical gradient over the inner membrane that drives transmembrane transport and the ATP synthase. Cytochrome c oxidase is the component of the respiratory chain that catalyzes the reduction of oxygen to water. Electrons originating from reduced cytochrome c in the intermembrane space (IMS) are transferred via the dinuclear copper A center (CU(A)) of subunit 2 and heme A of subunit 1 to the active site in subunit 1, a binuclear center (BNC) formed by heme A3 and copper B (CU(B)). The BNC reduces molecular oxygen to 2 water molecules using 4 electrons from cytochrome c in the IMS and 4 protons from the mitochondrial matrix. In Branchiostoma floridae (Florida lancelet), this protein is Cytochrome c oxidase subunit 3 (COIII).